The sequence spans 625 residues: Chaperone protein HtpG (625 aa).

The tract at residues 1-341 (MEKKQFQAES…SEDLSLNISR (341 aa)) is a; substrate-binding. The b stretch occupies residues 342-551 (EMLQHDRQLK…DGEITLEMEK (210 aa)). The c stretch occupies residues 552-625 (VLQAMPDNQN…FSQNMCKVMV (74 aa)).

The protein belongs to the heat shock protein 90 family. As to quaternary structure, homodimer.

The protein localises to the cytoplasm. In terms of biological role, molecular chaperone. Has ATPase activity. The chain is Chaperone protein HtpG from Shouchella clausii (strain KSM-K16) (Alkalihalobacillus clausii).